Consider the following 412-residue polypeptide: Probable tRNA pseudouridine synthase D (412 aa).

The active-site Nucleophile is the D97. The 204-residue stretch at 167–370 (ALPNYYGYQR…YGSYRRARLQ (204 aa)) folds into the TRUD domain.

It belongs to the pseudouridine synthase TruD family.

It catalyses the reaction uridine(13) in tRNA = pseudouridine(13) in tRNA. Functionally, could be responsible for synthesis of pseudouridine from uracil-13 in transfer RNAs. This chain is Probable tRNA pseudouridine synthase D, found in Pyrobaculum neutrophilum (strain DSM 2338 / JCM 9278 / NBRC 100436 / V24Sta) (Thermoproteus neutrophilus).